The sequence spans 356 residues: Phosphate acyltransferase (356 aa).

It belongs to the PlsX family. Homodimer. Probably interacts with PlsY.

The protein localises to the cytoplasm. The enzyme catalyses a fatty acyl-[ACP] + phosphate = an acyl phosphate + holo-[ACP]. The protein operates within lipid metabolism; phospholipid metabolism. Functionally, catalyzes the reversible formation of acyl-phosphate (acyl-PO(4)) from acyl-[acyl-carrier-protein] (acyl-ACP). This enzyme utilizes acyl-ACP as fatty acyl donor, but not acyl-CoA. The polypeptide is Phosphate acyltransferase (Shigella sonnei (strain Ss046)).